The sequence spans 323 residues: NADH-ubiquinone oxidoreductase chain 1 (323 aa).

A run of 8 helical transmembrane segments spans residues 8–28 (LINP…LTLI), 75–95 (MFLI…APLP), 105–125 (LGIL…LGSG), 151–171 (LGLI…TTLM), 177–197 (MWLI…TLAE), 234–254 (ANIL…SSFM), 258–278 (ELTT…FLWV), and 298–318 (FLPI…SMLG).

It belongs to the complex I subunit 1 family. In terms of assembly, core subunit of respiratory chain NADH dehydrogenase (Complex I) which is composed of 45 different subunits.

It localises to the mitochondrion inner membrane. It catalyses the reaction a ubiquinone + NADH + 5 H(+)(in) = a ubiquinol + NAD(+) + 4 H(+)(out). Core subunit of the mitochondrial membrane respiratory chain NADH dehydrogenase (Complex I) which catalyzes electron transfer from NADH through the respiratory chain, using ubiquinone as an electron acceptor. Essential for the catalytic activity and assembly of complex I. This chain is NADH-ubiquinone oxidoreductase chain 1 (mt-nd1), found in Xenopus laevis (African clawed frog).